Here is a 435-residue protein sequence, read N- to C-terminus: Maltodextrin transport system permease protein MalC (435 aa).

Helical transmembrane passes span 34-54 (GFIF…LATP), 73-93 (FMLI…LFYF), 130-150 (YLLI…PVIV), 199-219 (IIWA…TAII), 230-250 (IFGV…ILTF), 263-283 (TQVL…LIPW), 294-314 (LIMM…LGIL), 338-358 (NITF…QYTF), 371-391 (GGGP…ISWI), and 404-424 (MAAA…MIAF). An ABC transmembrane type-1 domain is found at 195 to 423 (LSWTIIWALA…IIVISISMIA (229 aa)).

Belongs to the binding-protein-dependent transport system permease family. MalFG subfamily.

It is found in the cell membrane. Part of the binding-protein-dependent transport system for maltodextrin; probably responsible for the translocation of the substrate across the membrane. The chain is Maltodextrin transport system permease protein MalC (malC) from Streptococcus pneumoniae serotype 4 (strain ATCC BAA-334 / TIGR4).